We begin with the raw amino-acid sequence, 876 residues long: Alanine--tRNA ligase (876 aa).

Residues histidine 565, histidine 569, cysteine 667, and histidine 671 each coordinate Zn(2+).

Belongs to the class-II aminoacyl-tRNA synthetase family. It depends on Zn(2+) as a cofactor.

The protein resides in the cytoplasm. The catalysed reaction is tRNA(Ala) + L-alanine + ATP = L-alanyl-tRNA(Ala) + AMP + diphosphate. Functionally, catalyzes the attachment of alanine to tRNA(Ala) in a two-step reaction: alanine is first activated by ATP to form Ala-AMP and then transferred to the acceptor end of tRNA(Ala). Also edits incorrectly charged Ser-tRNA(Ala) and Gly-tRNA(Ala) via its editing domain. This Staphylococcus aureus (strain USA300) protein is Alanine--tRNA ligase.